Consider the following 693-residue polypeptide: MAFETFSVALDKDKTLIFETGKIARQANGAVLVKMNETWVFSSACAASLSEAVDFLPFRVDYQEKFSSAGKTSGGFLKREGRPSEKEILISRLIDRSLRPSFPNRLMQDIQVLSYVWSYDGKTLPDPLAICGASAALAISEVPQNCIVAGVRVGLVEGKWVVNPTKDELDASKLDLVMAGTASAVLMIEGHCDFLTEEQVLEAIAFGQKYIAKICDAIEAWQKAIGKEKQLSAVLDLPEDVQNVVSNFIREKFEKALSFRDRDALEQVSKELEESVVANLVQEESDFSLLNVKAAFKNAKSNQMRALIRDLGIRVDGRSTTEIRPISIEVSFLPRTHGSCLFTRGETQSVAVCTLGGESMAQRFEDLNGDGAARFYLQYFFPPFSVGEVGRIGSPGRREIGHGKLAEKALSHVLPEASRFPYTVRVESNITESNGSSSMASVCGGCLSLMDAGVPIKAPVAGIAMGLILDQDKAIVLSDISGIEDHLGDMDFKVAGTEEGITAFQMDIKVEGITHEIMEQALAQAKQGRSHILNLMTQVMSSPNDSVSRYAPRIETMQINTSKIATVIGPGGKQIRQIIERSGAQVDINDNGLINISANTQESIDKAKELIEGLTGEVEVGKIYNGRVTSVVAFGAFVEVLPGKEGLCHISELSKQKVDNVADFVKEGDRLAVKLLSINEKGQLKLSHKATLE.

The Mg(2+) site is built by aspartate 485 and aspartate 491. A KH domain is found at 552–611 (PRIETMQINTSKIATVIGPGGKQIRQIIERSGAQVDINDNGLINISANTQESIDKAKELI). The region spanning 621 to 689 (GKIYNGRVTS…EKGQLKLSHK (69 aa)) is the S1 motif domain.

It belongs to the polyribonucleotide nucleotidyltransferase family. The cofactor is Mg(2+).

It is found in the cytoplasm. It catalyses the reaction RNA(n+1) + phosphate = RNA(n) + a ribonucleoside 5'-diphosphate. Its function is as follows. Involved in mRNA degradation. Catalyzes the phosphorolysis of single-stranded polyribonucleotides processively in the 3'- to 5'-direction. This chain is Polyribonucleotide nucleotidyltransferase, found in Chlamydia muridarum (strain MoPn / Nigg).